Consider the following 247-residue polypeptide: Cobalt transport protein CbiM (247 aa).

The N-terminal stretch at 1–21 (MVGWGVLILLMVLWLPRQAYA) is a signal peptide. The next 7 helical transmembrane spans lie at 27-47 (GYLP…ALIL), 64-84 (LVLA…LPSV), 96-116 (LGAV…ILLF), 119-139 (LLLA…MAVV), 159-179 (GVAV…TTSL), 181-201 (LALA…KFAS), and 202-222 (IFAV…VIMV).

It belongs to the CbiM family. In terms of assembly, forms an energy-coupling factor (ECF) transporter complex composed of an ATP-binding protein (A component, CbiO), a transmembrane protein (T component, CbiQ) and 2 possible substrate-capture proteins (S components, CbiM and CbiN) of unknown stoichimetry.

The protein resides in the cell membrane. The protein operates within cofactor biosynthesis; adenosylcobalamin biosynthesis. In terms of biological role, part of the energy-coupling factor (ECF) transporter complex CbiMNOQ involved in cobalt import. This Kyrpidia tusciae (strain DSM 2912 / NBRC 15312 / T2) (Bacillus tusciae) protein is Cobalt transport protein CbiM.